We begin with the raw amino-acid sequence, 330 residues long: BTB/POZ domain-containing adapter for CUL3-mediated RhoA degradation protein 1 (330 aa).

The segment at 1-34 is disordered; it reads MSAEASGSSGGHAVTVSGSSPSSSSHVGEEKPGR. The BTB domain maps to 40–108; it reads KYVKLNVGGT…LRDGTVPLPD (69 aa). Positions 282–291 are enriched in low complexity; that stretch reads GGVSSSGAGQ. Residues 282-304 are disordered; sequence GGVSSSGAGQSEEEGAGAGGGDR.

The protein belongs to the BACURD family.

The protein resides in the nucleus. Substrate-specific adapter of a BCR (BTB-CUL3-RBX1) E3 ubiquitin-protein ligase complex required for synaptic transmission. The BCR(KCTD13) E3 ubiquitin ligase complex mediates the ubiquitination of RHOA, leading to its degradation by the proteasome, thereby regulating the actin cytoskeleton and promoting synaptic transmission. The polypeptide is BTB/POZ domain-containing adapter for CUL3-mediated RhoA degradation protein 1 (Danio rerio (Zebrafish)).